The following is a 168-amino-acid chain: uncharacterized protein (168 aa).

4 helical membrane-spanning segments follow: residues 1–21, 41–61, 68–88, and 123–143; these read MFWL…AVAR, PYII…VLLM, WWLG…WALC, and VILE…MCLF.

The protein resides in the cell membrane. This is an uncharacterized protein from Bacillus subtilis (strain 168).